We begin with the raw amino-acid sequence, 404 residues long: F-box only protein 12 (404 aa).

Residues 1 to 44 (MKNSIPIDLIYEILSRLPAKSVARCRCVSKRWRSILRHQVFTEL) enclose the F-box domain. The chain crosses the membrane as a helical span at residues 383 to 403 (LAILFCLFFLLFNYLIRLCWV).

The protein resides in the membrane. The protein is F-box only protein 12 (FBX12) of Arabidopsis thaliana (Mouse-ear cress).